The chain runs to 1070 residues: DNA-directed RNA polymerase subunit beta (1070 aa).

Belongs to the RNA polymerase beta chain family. In plastids the minimal PEP RNA polymerase catalytic core is composed of four subunits: alpha, beta, beta', and beta''. When a (nuclear-encoded) sigma factor is associated with the core the holoenzyme is formed, which can initiate transcription.

It localises to the plastid. Its subcellular location is the chloroplast. The catalysed reaction is RNA(n) + a ribonucleoside 5'-triphosphate = RNA(n+1) + diphosphate. Its function is as follows. DNA-dependent RNA polymerase catalyzes the transcription of DNA into RNA using the four ribonucleoside triphosphates as substrates. The polypeptide is DNA-directed RNA polymerase subunit beta (Piper cenocladum (Ant piper)).